The sequence spans 377 residues: 3-dehydroquinate synthase (377 aa).

Residues glycine 113–aspartate 117, threonine 137–threonine 138, lysine 150, and lysine 159 contribute to the NAD(+) site. 3 residues coordinate Zn(2+): glutamate 192, histidine 254, and histidine 273.

It belongs to the sugar phosphate cyclases superfamily. Dehydroquinate synthase family. Co(2+) is required as a cofactor. The cofactor is Zn(2+). It depends on NAD(+) as a cofactor.

The protein resides in the cytoplasm. It carries out the reaction 7-phospho-2-dehydro-3-deoxy-D-arabino-heptonate = 3-dehydroquinate + phosphate. The protein operates within metabolic intermediate biosynthesis; chorismate biosynthesis; chorismate from D-erythrose 4-phosphate and phosphoenolpyruvate: step 2/7. Its function is as follows. Catalyzes the conversion of 3-deoxy-D-arabino-heptulosonate 7-phosphate (DAHP) to dehydroquinate (DHQ). In Bartonella tribocorum (strain CIP 105476 / IBS 506), this protein is 3-dehydroquinate synthase.